A 236-amino-acid polypeptide reads, in one-letter code: 2-C-methyl-D-erythritol 4-phosphate cytidylyltransferase (236 aa).

It belongs to the IspD/TarI cytidylyltransferase family. IspD subfamily.

The enzyme catalyses 2-C-methyl-D-erythritol 4-phosphate + CTP + H(+) = 4-CDP-2-C-methyl-D-erythritol + diphosphate. It functions in the pathway isoprenoid biosynthesis; isopentenyl diphosphate biosynthesis via DXP pathway; isopentenyl diphosphate from 1-deoxy-D-xylulose 5-phosphate: step 2/6. Catalyzes the formation of 4-diphosphocytidyl-2-C-methyl-D-erythritol from CTP and 2-C-methyl-D-erythritol 4-phosphate (MEP). In Burkholderia pseudomallei (strain 1106a), this protein is 2-C-methyl-D-erythritol 4-phosphate cytidylyltransferase.